A 730-amino-acid polypeptide reads, in one-letter code: Diacylglycerol kinase alpha (730 aa).

EF-hand domains lie at 111–146 (RPEDKLEFTFKLYDMDRNGILDSTEVEKIILQMMRV) and 156–191 (ELRPILQEMMREMDQDGSGSVSLDEWVRAGATTVPL). Ca(2+) contacts are provided by Asp124, Asp126, Asn128, Glu135, Asp169, Asp171, Ser173, Ser175, and Glu180. 2 Phorbol-ester/DAG-type zinc fingers span residues 206 to 254 (NHIW…AQPC) and 270 to 320 (SHLW…GPEC). The DAGKc domain occupies 368 to 501 (SNTHPLLVFI…LDRWFLEVIP (134 aa)). N6-acetyllysine is present on Lys479.

Belongs to the eukaryotic diacylglycerol kinase family. In terms of assembly, monomer.

The protein resides in the cytoplasm. Its subcellular location is the cytosol. The catalysed reaction is a 1,2-diacyl-sn-glycerol + ATP = a 1,2-diacyl-sn-glycero-3-phosphate + ADP + H(+). The enzyme catalyses a 1-O-alkyl-sn-glycerol + ATP = a 1-O-alkyl-sn-glycero-3-phosphate + ADP + H(+). It carries out the reaction 1-O-alkyl-2-acyl-sn-glycerol + ATP = 1-O-alkyl-2-acyl-sn-glycero-3-phosphate + ADP + H(+). It catalyses the reaction 1,2-dihexadecanoyl-sn-glycerol + ATP = 1,2-dihexadecanoyl-sn-glycero-3-phosphate + ADP + H(+). The catalysed reaction is 1-hexadecanoyl-2-(9Z-octadecenoyl)-sn-glycerol + ATP = 1-hexadecanoyl-2-(9Z-octadecenoyl)-sn-glycero-3-phosphate + ADP + H(+). The enzyme catalyses 2-(9Z-octadecenoyl)-glycerol + ATP = 2-(9Z-octadecenoyl)-sn-glycero-3-phosphate + ADP + H(+). It carries out the reaction 1,2-di-(9Z-octadecenoyl)-sn-glycerol + ATP = 1,2-di-(9Z-octadecenoyl)-sn-glycero-3-phosphate + ADP + H(+). It catalyses the reaction 1-octadecanoyl-2-(5Z,8Z,11Z,14Z-eicosatetraenoyl)-sn-glycerol + ATP = 1-octadecanoyl-2-(5Z,8Z,11Z,14Z-eicosatetraenoyl)-sn-glycero-3-phosphate + ADP + H(+). The catalysed reaction is 1,2-didecanoyl-sn-glycerol + ATP = 1,2-didecanoyl-sn-glycero-3-phosphate + ADP + H(+). The enzyme catalyses 1-O-hexadecyl-2-acetyl-sn-glycerol + ATP = 1-O-hexadecyl-2-acetyl-sn-glycero-3-phosphate + ADP + H(+). It carries out the reaction 1-O-hexadecyl-2-(5Z,8Z,11Z,14Z-eicosatetraenoyl)-sn-glycerol + ATP = 1-O-hexadecyl-2-(5Z,8Z,11Z,14Z-eicosatetraenoyl)-sn-glycero-3-phosphate + ADP + H(+). It catalyses the reaction 1-O-hexadecyl-2-(9Z-octadecenoyl)-sn-glycerol + ATP = 1-O-hexadecyl-2-(9Z-octadecenoyl)-sn-glycero-3-phosphate + ADP + H(+). The catalysed reaction is 1-O-hexadecyl-sn-glycerol + ATP = 1-O-hexadecyl-sn-glycero-3-phosphate + ADP + H(+). The protein operates within lipid metabolism; glycerolipid metabolism. Its activity is regulated as follows. Stimulated by calcium and phosphatidylserine. In terms of biological role, diacylglycerol kinase that converts diacylglycerol/DAG into phosphatidic acid/phosphatidate/PA and regulates the respective levels of these two bioactive lipids. Thereby, acts as a central switch between the signaling pathways activated by these second messengers with different cellular targets and opposite effects in numerous biological processes. Also plays an important role in the biosynthesis of complex lipids. Can also phosphorylate 1-alkyl-2-acylglycerol in vitro as efficiently as diacylglycerol provided it contains an arachidonoyl group. Also involved in the production of alkyl-lysophosphatidic acid, another bioactive lipid, through the phosphorylation of 1-alkyl-2-acetyl glycerol. This Mus musculus (Mouse) protein is Diacylglycerol kinase alpha (Dgka).